A 220-amino-acid polypeptide reads, in one-letter code: Large ribosomal subunit protein uL16 (220 aa).

The protein belongs to the universal ribosomal protein uL16 family. In terms of assembly, component of the large ribosomal subunit. Mature ribosomes consist of a small (40S) and a large (60S) subunit. The 40S subunit contains about 32 different proteins and 1 molecule of RNA (18S). The 60S subunit contains 45 different proteins and 3 molecules of RNA (25S, 5.8S and 5S).

The protein localises to the cytoplasm. Component of the ribosome, a large ribonucleoprotein complex responsible for the synthesis of proteins in the cell. The small ribosomal subunit (SSU) binds messenger RNAs (mRNAs) and translates the encoded message by selecting cognate aminoacyl-transfer RNA (tRNA) molecules. The large subunit (LSU) contains the ribosomal catalytic site termed the peptidyl transferase center (PTC), which catalyzes the formation of peptide bonds, thereby polymerizing the amino acids delivered by tRNAs into a polypeptide chain. The nascent polypeptides leave the ribosome through a tunnel in the LSU and interact with protein factors that function in enzymatic processing, targeting, and the membrane insertion of nascent chains at the exit of the ribosomal tunnel. This is Large ribosomal subunit protein uL16 from Candida albicans (strain SC5314 / ATCC MYA-2876) (Yeast).